Reading from the N-terminus, the 266-residue chain is Undecaprenyl-diphosphatase (266 aa).

7 helical membrane passes run 41 to 61 (NLAF…VILW), 82 to 102 (YVIN…FFKD), 106 to 126 (AIFG…AALL), 140 to 160 (ISMK…LPGL), 180 to 200 (LAQF…LLDG), 213 to 233 (IPTL…CLAC), and 245 to 265 (LIYF…VSQL).

This sequence belongs to the UppP family.

It is found in the cell inner membrane. It carries out the reaction di-trans,octa-cis-undecaprenyl diphosphate + H2O = di-trans,octa-cis-undecaprenyl phosphate + phosphate + H(+). Catalyzes the dephosphorylation of undecaprenyl diphosphate (UPP). Confers resistance to bacitracin. The chain is Undecaprenyl-diphosphatase from Bacteroides fragilis (strain ATCC 25285 / DSM 2151 / CCUG 4856 / JCM 11019 / LMG 10263 / NCTC 9343 / Onslow / VPI 2553 / EN-2).